Here is a 472-residue protein sequence, read N- to C-terminus: Argininosuccinate lyase (472 aa).

It belongs to the lyase 1 family. Argininosuccinate lyase subfamily.

Its subcellular location is the cytoplasm. It catalyses the reaction 2-(N(omega)-L-arginino)succinate = fumarate + L-arginine. It functions in the pathway amino-acid biosynthesis; L-arginine biosynthesis; L-arginine from L-ornithine and carbamoyl phosphate: step 3/3. The polypeptide is Argininosuccinate lyase (Polynucleobacter necessarius subsp. necessarius (strain STIR1)).